We begin with the raw amino-acid sequence, 98 residues long: Plastocyanin (98 aa).

The 98-residue stretch at 1–98 (AQIVKLGGDD…AGMKMTITVQ (98 aa)) folds into the Plastocyanin-like domain. Positions 38, 83, 86, and 91 each coordinate Cu(2+).

Belongs to the plastocyanin family. Requires Cu(2+) as cofactor.

The protein resides in the plastid. It is found in the chloroplast thylakoid membrane. Its function is as follows. Participates in electron transfer between P700 and the cytochrome b6-f complex in photosystem I. Has antiviral activity against Potato virus Y (strain N). The sequence is that of Plastocyanin (PETE) from Ulva pertusa (Sea lettuce).